The primary structure comprises 219 residues: Ribosomal RNA small subunit methyltransferase G (219 aa).

Gly81, Leu86, and Arg150 together coordinate S-adenosyl-L-methionine.

Belongs to the methyltransferase superfamily. RNA methyltransferase RsmG family.

The protein localises to the cytoplasm. The catalysed reaction is guanosine(527) in 16S rRNA + S-adenosyl-L-methionine = N(7)-methylguanosine(527) in 16S rRNA + S-adenosyl-L-homocysteine. Specifically methylates the N7 position of guanine in position 527 of 16S rRNA. This Magnetococcus marinus (strain ATCC BAA-1437 / JCM 17883 / MC-1) protein is Ribosomal RNA small subunit methyltransferase G.